The following is a 458-amino-acid chain: Bifunctional protein GlmU (458 aa).

The segment at methionine 1–glutamine 224 is pyrophosphorylase. UDP-N-acetyl-alpha-D-glucosamine contacts are provided by residues leucine 6–glycine 9, lysine 20, glutamine 71, and glycine 76–threonine 77. Position 99 (aspartate 99) interacts with Mg(2+). UDP-N-acetyl-alpha-D-glucosamine is bound by residues glycine 136, glutamate 150, asparagine 165, and asparagine 222. Position 222 (asparagine 222) interacts with Mg(2+). Residues leucine 225–aspartate 245 form a linker region. The N-acetyltransferase stretch occupies residues glycine 246–valine 458. UDP-N-acetyl-alpha-D-glucosamine contacts are provided by arginine 328 and lysine 346. The Proton acceptor role is filled by histidine 358. The UDP-N-acetyl-alpha-D-glucosamine site is built by tyrosine 361 and asparagine 372. Acetyl-CoA is bound by residues asparagine 381–tyrosine 382, serine 401, serine 419, and arginine 436.

In the N-terminal section; belongs to the N-acetylglucosamine-1-phosphate uridyltransferase family. This sequence in the C-terminal section; belongs to the transferase hexapeptide repeat family. In terms of assembly, homotrimer. The cofactor is Mg(2+).

The protein localises to the cytoplasm. The enzyme catalyses alpha-D-glucosamine 1-phosphate + acetyl-CoA = N-acetyl-alpha-D-glucosamine 1-phosphate + CoA + H(+). It catalyses the reaction N-acetyl-alpha-D-glucosamine 1-phosphate + UTP + H(+) = UDP-N-acetyl-alpha-D-glucosamine + diphosphate. Its pathway is nucleotide-sugar biosynthesis; UDP-N-acetyl-alpha-D-glucosamine biosynthesis; N-acetyl-alpha-D-glucosamine 1-phosphate from alpha-D-glucosamine 6-phosphate (route II): step 2/2. It functions in the pathway nucleotide-sugar biosynthesis; UDP-N-acetyl-alpha-D-glucosamine biosynthesis; UDP-N-acetyl-alpha-D-glucosamine from N-acetyl-alpha-D-glucosamine 1-phosphate: step 1/1. The protein operates within bacterial outer membrane biogenesis; LPS lipid A biosynthesis. Catalyzes the last two sequential reactions in the de novo biosynthetic pathway for UDP-N-acetylglucosamine (UDP-GlcNAc). The C-terminal domain catalyzes the transfer of acetyl group from acetyl coenzyme A to glucosamine-1-phosphate (GlcN-1-P) to produce N-acetylglucosamine-1-phosphate (GlcNAc-1-P), which is converted into UDP-GlcNAc by the transfer of uridine 5-monophosphate (from uridine 5-triphosphate), a reaction catalyzed by the N-terminal domain. The sequence is that of Bifunctional protein GlmU from Bdellovibrio bacteriovorus (strain ATCC 15356 / DSM 50701 / NCIMB 9529 / HD100).